The sequence spans 509 residues: MEEIQRYLQPDRSQQHNFLYPLIFQEYIYALAHDHGLNRNRSILLENPGYNNKLSFLIVKRLITRMYQQNHFLISTNDSNKNEFLGCNKSLYSQMISEGFAFIVEIPFSLRLISSLSSFEGKKIFKSHNLRSIHSTFPFLEDNFSHLNYVLDILIPYPVHLEILVQTLRYWVKDASSLHLLRFFLHEYWNLNSLITSKKPGYSFSKKKQRFFFFLYNSYVYECESTFVFLRNQSSHLRSTSFGALLERIYFYGKIERLIEVFAKDFQVTLCLFKDPFMHYVRYQGKSILASKGTFLLMNKWKFYLVNFWQCHFSLCFHTGRIHINQLSNHSRDFMGYLSSVRLNSSMVRSQMLENSFLINNAIKKFDTLVPIIPLIGSLAKANFCTVLGHPISKPVWSDLSDSDIIDRFGRICKNLFHYYSGSSKKKTLYRIKYILRLSCARTLARKHKSTVRAFLKRSGSELLEEFLTSEEQVLSLTFPRASSNLWGVYRSRIWYLDIFCINDLANYQ.

Belongs to the intron maturase 2 family. MatK subfamily.

It localises to the plastid. It is found in the chloroplast. Its function is as follows. Usually encoded in the trnK tRNA gene intron. Probably assists in splicing its own and other chloroplast group II introns. The protein is Maturase K of Nicotiana tomentosiformis (Tobacco).